The primary structure comprises 180 residues: Probable nicotinate-nucleotide adenylyltransferase (180 aa).

This sequence belongs to the NadD family.

The catalysed reaction is nicotinate beta-D-ribonucleotide + ATP + H(+) = deamido-NAD(+) + diphosphate. It participates in cofactor biosynthesis; NAD(+) biosynthesis; deamido-NAD(+) from nicotinate D-ribonucleotide: step 1/1. Its function is as follows. Catalyzes the reversible adenylation of nicotinate mononucleotide (NaMN) to nicotinic acid adenine dinucleotide (NaAD). This Pelagibacter ubique (strain HTCC1062) protein is Probable nicotinate-nucleotide adenylyltransferase.